The sequence spans 605 residues: MRVKDFTPKLVPTSPGVYLMKDDSGEVLYIGKAKNLRNRITTYFQKQGDSRERIPFLMKKTTTIETILVSNETEALLLENNLIKKHHPKYNVLLKDDKTFFCLAISLTHPWPKIDAIRTKAITSSKRQIIFGPYVSAEACRTLLEVISQWFPLRTCSNREFASRRRPCILYEMKRCLAPCVHLCTHEEYEETLEKAVLFLKGKVSEIIQDLEKSIEKASQEQKFEQAGIYYRTLKLIQQAMEKQHVEKFHFQNIDAIGLYRKYQETVITVLTVRSGKLLGARHFPFSENAQEDTDLLSSFILQYYANQPQTPKEILTPIPLNIPELPYLLNKDTPPQLRSPKTGYGKELLTLAKNNAKVHAETTTQSSSLPYEEMKKILKSPDYPYRIECYDNAHLQGSHGVGVYIVYENDAFSPKSYRTFSISSLAHNDLATFHEVLSRRFSSLTSSLPDMIVIDGGRAQYSQAKKTLKELNLTGIQVVSLAKEASNHSSSLRNEKLFCDTFPQGIQLAPTSKLLQFFQKLRDEAHRFAISKHRRKRYKDLLFPQEKIPGIGEVKRKRLLQKFKSWKQVMKASQGELEAIPGLTKKDIQQLLAKQVEDSKLTED.

The GIY-YIG domain occupies 13 to 92 (TSPGVYLMKD…IKKHHPKYNV (80 aa)). One can recognise a UVR domain in the interval 205–240 (SEIIQDLEKSIEKASQEQKFEQAGIYYRTLKLIQQA).

The protein belongs to the UvrC family. Interacts with UvrB in an incision complex.

The protein localises to the cytoplasm. Functionally, the UvrABC repair system catalyzes the recognition and processing of DNA lesions. UvrC both incises the 5' and 3' sides of the lesion. The N-terminal half is responsible for the 3' incision and the C-terminal half is responsible for the 5' incision. The sequence is that of UvrABC system protein C from Chlamydia caviae (strain ATCC VR-813 / DSM 19441 / 03DC25 / GPIC) (Chlamydophila caviae).